Reading from the N-terminus, the 576-residue chain is MNIQALLSDKVSQALIAAGAPADCEAQVRQSAKAQFGDYQANGVMAVAKKLGMQPRQLAERVVELLDLTGIASKIEIAGPGFINIFLDRQWVAEKVEYALTAPKLGVAPVEPQTIVVDYSAPNVAKQMHVGHLRSTIIGDAAVRTLAFLGHNVIRANHVGDWGTQFGMLIAYLEKMQNENASDMGLSDLELFYQQAKKTYDEDEEFALRARAYVVKLQSGDEYCRQMWRKLVDITMAQNQVAYDRLNVTLTKDDVMGESLYNAMLPEIVADLKAKGLAVESEGATVVYLDEYKNKDGEPMGVIIQKKDGGYLYTTTDIACAKYRYETLGADRILYYIDSRQHQHLMQAWTIVRKAGYVPESVPLEHHMFGMMLGKDGKPFKTRSGGTVKLSDLLDEAVERAGKLIAEKNPDMPADELKQVINAVGIGAVKYADLSKSRTTDYIFDWDNMLALDGNTAPYMQYAYTRVVSVFRRAGVDETSLTLPLVITEDREAALATRLLQFEEIITTVAREGTPHVMCSYLYDVAGLFSSFYEHCQILNAESEEIRQSRLKLAMLTAKTLKQGLDTLGIQTVERM.

The short motif at 122–132 (PNVAKQMHVGH) is the 'HIGH' region element.

The protein belongs to the class-I aminoacyl-tRNA synthetase family. Monomer.

Its subcellular location is the cytoplasm. The enzyme catalyses tRNA(Arg) + L-arginine + ATP = L-arginyl-tRNA(Arg) + AMP + diphosphate. The polypeptide is Arginine--tRNA ligase (Yersinia pseudotuberculosis serotype IB (strain PB1/+)).